We begin with the raw amino-acid sequence, 137 residues long: MNIDYVRSILPHRYPFLLVDGVIEESEDRIVAFKNISISDPVFQGHFPEYPIYPGVLIIEGLAQTAGILLLKDLEGIPLFLGIDEARFKKEVRPGDKLIYEVKKIGEKLGTVQVEGVAKVENTIVAKAKLLLGVKKK.

His46 is a catalytic residue.

This sequence belongs to the thioester dehydratase family. FabZ subfamily.

Its subcellular location is the cytoplasm. The catalysed reaction is a (3R)-hydroxyacyl-[ACP] = a (2E)-enoyl-[ACP] + H2O. Involved in unsaturated fatty acids biosynthesis. Catalyzes the dehydration of short chain beta-hydroxyacyl-ACPs and long chain saturated and unsaturated beta-hydroxyacyl-ACPs. The chain is 3-hydroxyacyl-[acyl-carrier-protein] dehydratase FabZ from Thermotoga neapolitana (strain ATCC 49049 / DSM 4359 / NBRC 107923 / NS-E).